The following is a 435-amino-acid chain: Serine--tRNA ligase (435 aa).

241-243 contributes to the L-serine binding site; the sequence is TAE. 272 to 274 provides a ligand contact to ATP; that stretch reads RSE. E295 contacts L-serine. ATP is bound at residue 359 to 362; it reads EISS. S395 is a binding site for L-serine.

The protein belongs to the class-II aminoacyl-tRNA synthetase family. Type-1 seryl-tRNA synthetase subfamily. As to quaternary structure, homodimer. The tRNA molecule binds across the dimer.

The protein resides in the cytoplasm. The catalysed reaction is tRNA(Ser) + L-serine + ATP = L-seryl-tRNA(Ser) + AMP + diphosphate + H(+). The enzyme catalyses tRNA(Sec) + L-serine + ATP = L-seryl-tRNA(Sec) + AMP + diphosphate + H(+). It functions in the pathway aminoacyl-tRNA biosynthesis; selenocysteinyl-tRNA(Sec) biosynthesis; L-seryl-tRNA(Sec) from L-serine and tRNA(Sec): step 1/1. Its function is as follows. Catalyzes the attachment of serine to tRNA(Ser). Is also able to aminoacylate tRNA(Sec) with serine, to form the misacylated tRNA L-seryl-tRNA(Sec), which will be further converted into selenocysteinyl-tRNA(Sec). This is Serine--tRNA ligase from Actinobacillus pleuropneumoniae serotype 7 (strain AP76).